A 152-amino-acid chain; its full sequence is Protein SprT-like (152 aa).

The SprT-like domain occupies 7–148; the sequence is QRLVEEVSLQ…GKCKGKLNLI (142 aa). His-67 is a Zn(2+) binding site. Residue Glu-68 is part of the active site. A Zn(2+)-binding site is contributed by His-71.

This sequence belongs to the SprT family. It depends on Zn(2+) as a cofactor.

The protein localises to the cytoplasm. The chain is Protein SprT-like from Bacillus anthracis (strain A0248).